We begin with the raw amino-acid sequence, 1070 residues long: Regulator of Ty1 transposition protein 107 (1070 aa).

BRCT domains are found at residues 2–103 (STSL…QDSV), 117–213 (NPFH…LYHF), 260–352 (HPNK…FYMF), and 369–453 (PFHA…EQCY). The residue at position 304 (Ser304) is a Phosphoserine. Thr532 carries the post-translational modification Phosphothreonine. Residues 572–659 (SRASFPVVDS…LQVQLGQRTK (88 aa)) form a disordered region. Over residues 580 to 592 (DSKKSNLQKKDSN) the composition is skewed to basic and acidic residues. A phosphoserine mark is found at Ser591 and Ser593. Basic and acidic residues-rich tracts occupy residues 603–615 (CEGH…KEFT) and 622–645 (DAPK…KKEE). A Phosphoserine modification is found at Ser720. Residues 722-731 (NDDHINDEKP) show a composition bias toward basic and acidic residues. The interval 722-753 (NDDHINDEKPAVNSKYTTPKTSQNITSGVDTP) is disordered. Residues 735–753 (SKYTTPKTSQNITSGVDTP) show a composition bias toward polar residues. Residues Ser800 and Ser806 each carry the phosphoserine modification. 2 BRCT domains span residues 829-910 (FNEL…IDLL) and 934-1049 (GINE…CVES).

Forms a complex with the cullin-RING ligase (CRL) RTT101(MMS1-MMS22). Interacts with MMS22 and RTT101. Interacts with histone H2A; requires H2A to be phosphorylated (gamma-H2A). Interacts with RAD55. Phosphorylated by MEC1.

The protein resides in the nucleus. Functionally, required for resumption of chromosome replication after DNA damage, specifically in S phase. Is recruited to chromatin in the presence of RTT109 and RTT101 in response to stalled replication forks and acts as a scaffold during DNA repair. In Saccharomyces cerevisiae (strain ATCC 204508 / S288c) (Baker's yeast), this protein is Regulator of Ty1 transposition protein 107 (RTT107).